Consider the following 569-residue polypeptide: BTB/POZ domain-containing protein At3g50840 (569 aa).

Positions 18–87 (SDIEIEVDDI…SYGFKVDISV (70 aa)) constitute a BTB domain. In terms of domain architecture, NPH3 spans 194-459 (ELWFEDLTEL…VQVLFLEQLQ (266 aa)). The segment covering 240 to 259 (ISRSSSASSSSSSSSTTIAS) has biased composition (low complexity). The tract at residues 240–261 (ISRSSSASSSSSSSSTTIASEN) is disordered. Y400 carries the phosphotyrosine modification.

The protein belongs to the NPH3 family.

Its pathway is protein modification; protein ubiquitination. May act as a substrate-specific adapter of an E3 ubiquitin-protein ligase complex (CUL3-RBX1-BTB) which mediates the ubiquitination and subsequent proteasomal degradation of target proteins. This chain is BTB/POZ domain-containing protein At3g50840, found in Arabidopsis thaliana (Mouse-ear cress).